Here is a 77-residue protein sequence, read N- to C-terminus: Large ribosomal subunit protein eL13 (77 aa).

Belongs to the eukaryotic ribosomal protein eL13 family.

In Sulfurisphaera tokodaii (strain DSM 16993 / JCM 10545 / NBRC 100140 / 7) (Sulfolobus tokodaii), this protein is Large ribosomal subunit protein eL13.